We begin with the raw amino-acid sequence, 391 residues long: Acetate kinase (391 aa).

N4 lines the Mg(2+) pocket. K11 is an ATP binding site. Substrate is bound at residue R85. Residue D142 is the Proton donor/acceptor of the active site. Residues 202–206 (HLGNG), 277–279 (DLR), and 325–329 (GIGEN) each bind ATP. Residue E378 participates in Mg(2+) binding.

It belongs to the acetokinase family. In terms of assembly, homodimer. The cofactor is Mg(2+). It depends on Mn(2+) as a cofactor.

The protein localises to the cytoplasm. The catalysed reaction is acetate + ATP = acetyl phosphate + ADP. It participates in metabolic intermediate biosynthesis; acetyl-CoA biosynthesis; acetyl-CoA from acetate: step 1/2. In terms of biological role, catalyzes the formation of acetyl phosphate from acetate and ATP. Can also catalyze the reverse reaction. The sequence is that of Acetate kinase from Halalkalibacterium halodurans (strain ATCC BAA-125 / DSM 18197 / FERM 7344 / JCM 9153 / C-125) (Bacillus halodurans).